The primary structure comprises 624 residues: Laccase-1 (624 aa).

The N-terminal stretch at M1–S20 is a signal peptide. 2 consecutive Plastocyanin-like domains span residues T69 to N183 and D195 to Y355. H117, H119, H162, and H164 together coordinate Cu cation. Residues C138 and C578 are joined by a disulfide bond. Residues N242, N320, and N430 are each glycosylated (N-linked (GlcNAc...) asparagine). A Plastocyanin-like 3 domain is found at I469–P562. Positions 480, 483, and 485 each coordinate Cu cation. N503 is a glycosylation site (N-linked (GlcNAc...) asparagine). 4 residues coordinate Cu cation: H543, C544, H545, and H549. Residues D582–S603 form a disordered region. Residues S592–S603 are compositionally biased toward low complexity.

Belongs to the multicopper oxidase family. The cofactor is Cu cation.

The protein resides in the secreted. The protein localises to the cell wall. The catalysed reaction is 4 hydroquinone + O2 = 4 benzosemiquinone + 2 H2O. Its function is as follows. Laccase that catalyzes the oxidation of certain aromatic compounds, including L-dopa, to quinones, which then polymerize to melanin. Able to oxidize a wide variety of aromatic diphenol and diamino groups in the ortho, meta, and para positions but not monophenolic groups such as in phenol, tyramine, or tyrosine. Plays an important role in virulence. Plays a role in dissemination to extrapulmonary sites but is not involved in pulmonary growth or in elicitation of cellular immune responses in the lung. This chain is Laccase-1 (LAC1), found in Cryptococcus neoformans var. grubii serotype A (strain H99 / ATCC 208821 / CBS 10515 / FGSC 9487) (Filobasidiella neoformans var. grubii).